Here is a 336-residue protein sequence, read N- to C-terminus: Holliday junction branch migration complex subunit RuvB (336 aa).

The large ATPase domain (RuvB-L) stretch occupies residues 1-182; it reads MKERIVNLET…FGMSFRMQFY (182 aa). ATP is bound by residues leucine 21, arginine 22, glycine 63, lysine 66, threonine 67, serine 68, 129-131, arginine 172, tyrosine 182, and arginine 219; that span reads EDF. Residue threonine 67 coordinates Mg(2+). Positions 183 to 253 are small ATPAse domain (RuvB-S); the sequence is SPSELSLIIK…ITLHALNELG (71 aa). The interval 256 to 336 is head domain (RuvB-H); the sequence is ELGFDEADLA…IPTLNPQTLF (81 aa). DNA contacts are provided by arginine 310 and arginine 315.

It belongs to the RuvB family. Homohexamer. Forms an RuvA(8)-RuvB(12)-Holliday junction (HJ) complex. HJ DNA is sandwiched between 2 RuvA tetramers; dsDNA enters through RuvA and exits via RuvB. An RuvB hexamer assembles on each DNA strand where it exits the tetramer. Each RuvB hexamer is contacted by two RuvA subunits (via domain III) on 2 adjacent RuvB subunits; this complex drives branch migration. In the full resolvosome a probable DNA-RuvA(4)-RuvB(12)-RuvC(2) complex forms which resolves the HJ.

The protein localises to the cytoplasm. It carries out the reaction ATP + H2O = ADP + phosphate + H(+). In terms of biological role, the RuvA-RuvB-RuvC complex processes Holliday junction (HJ) DNA during genetic recombination and DNA repair, while the RuvA-RuvB complex plays an important role in the rescue of blocked DNA replication forks via replication fork reversal (RFR). RuvA specifically binds to HJ cruciform DNA, conferring on it an open structure. The RuvB hexamer acts as an ATP-dependent pump, pulling dsDNA into and through the RuvAB complex. RuvB forms 2 homohexamers on either side of HJ DNA bound by 1 or 2 RuvA tetramers; 4 subunits per hexamer contact DNA at a time. Coordinated motions by a converter formed by DNA-disengaged RuvB subunits stimulates ATP hydrolysis and nucleotide exchange. Immobilization of the converter enables RuvB to convert the ATP-contained energy into a lever motion, pulling 2 nucleotides of DNA out of the RuvA tetramer per ATP hydrolyzed, thus driving DNA branch migration. The RuvB motors rotate together with the DNA substrate, which together with the progressing nucleotide cycle form the mechanistic basis for DNA recombination by continuous HJ branch migration. Branch migration allows RuvC to scan DNA until it finds its consensus sequence, where it cleaves and resolves cruciform DNA. This is Holliday junction branch migration complex subunit RuvB from Helicobacter pylori (strain J99 / ATCC 700824) (Campylobacter pylori J99).